The primary structure comprises 349 residues: 3-dehydroquinate synthase (349 aa).

NAD(+) contacts are provided by residues 63 to 68 (DGEDYK), 97 to 101 (GVIGD), 121 to 122 (TT), lysine 134, lysine 143, and 161 to 164 (FLQT). 3 residues coordinate Zn(2+): glutamate 176, histidine 235, and histidine 252.

The protein belongs to the sugar phosphate cyclases superfamily. Dehydroquinate synthase family. Requires Co(2+) as cofactor. Zn(2+) is required as a cofactor. NAD(+) serves as cofactor.

The protein localises to the cytoplasm. It catalyses the reaction 7-phospho-2-dehydro-3-deoxy-D-arabino-heptonate = 3-dehydroquinate + phosphate. It participates in metabolic intermediate biosynthesis; chorismate biosynthesis; chorismate from D-erythrose 4-phosphate and phosphoenolpyruvate: step 2/7. Its function is as follows. Catalyzes the conversion of 3-deoxy-D-arabino-heptulosonate 7-phosphate (DAHP) to dehydroquinate (DHQ). The polypeptide is 3-dehydroquinate synthase (Nitratiruptor sp. (strain SB155-2)).